Consider the following 673-residue polypeptide: ATP-dependent zinc metalloprotease FtsH (673 aa).

Residues 1–7 (MNGFFKN) are Cytoplasmic-facing. Residues 8-28 (LSLWLVIGLLMVMLFNLFNSP) form a helical membrane-spanning segment. The Periplasmic portion of the chain corresponds to 29 to 100 (QGPGQSITFS…DVREPEGTPM (72 aa)). Residues 101–121 (LMQILISWFPMLLLIAVWIYF) traverse the membrane as a helical segment. Topologically, residues 122–673 (MRQMQSGGGR…DTPEGDDKDR (552 aa)) are cytoplasmic. An ATP-binding site is contributed by 194-201 (GPPGTGKT). His-416 lines the Zn(2+) pocket. Glu-417 is an active-site residue. His-420 and Asp-492 together coordinate Zn(2+). Positions 601-673 (ALKPLKKKDE…DTPEGDDKDR (73 aa)) are disordered. Residues 648 to 660 (STRTATEASTQEV) are compositionally biased toward polar residues. Residues 661–673 (VSKDTPEGDDKDR) are compositionally biased toward basic and acidic residues.

In the central section; belongs to the AAA ATPase family. This sequence in the C-terminal section; belongs to the peptidase M41 family. Homohexamer. Requires Zn(2+) as cofactor.

The protein localises to the cell inner membrane. Functionally, acts as a processive, ATP-dependent zinc metallopeptidase for both cytoplasmic and membrane proteins. Plays a role in the quality control of integral membrane proteins. This Magnetococcus marinus (strain ATCC BAA-1437 / JCM 17883 / MC-1) protein is ATP-dependent zinc metalloprotease FtsH.